Consider the following 161-residue polypeptide: Large ribosomal subunit protein uL30m (161 aa).

Residues M1–H34 constitute a mitochondrion transit peptide.

It belongs to the universal ribosomal protein uL30 family. As to quaternary structure, component of the mitochondrial large ribosomal subunit (mt-LSU). Mature mammalian 55S mitochondrial ribosomes consist of a small (28S) and a large (39S) subunit. The 28S small subunit contains a 12S ribosomal RNA (12S mt-rRNA) and 30 different proteins. The 39S large subunit contains a 16S rRNA (16S mt-rRNA), a copy of mitochondrial valine transfer RNA (mt-tRNA(Val)), which plays an integral structural role, and 52 different proteins.

The protein localises to the mitochondrion. In Homo sapiens (Human), this protein is Large ribosomal subunit protein uL30m (MRPL30).